The primary structure comprises 393 residues: S-adenosylmethionine synthase 1 (393 aa).

Glutamate 9 lines the Mg(2+) pocket. Position 15 (histidine 15) interacts with ATP. Glutamate 43 is a K(+) binding site. Residues glutamate 56 and glutamine 99 each contribute to the L-methionine site. Residues 167–169, 235–238, aspartate 246, 252–253, alanine 269, lysine 273, and lysine 277 each bind ATP; these read DGK, SGRF, and RK. Position 246 (aspartate 246) interacts with L-methionine. Lysine 277 is a binding site for L-methionine.

Belongs to the AdoMet synthase family. In terms of assembly, homotetramer. Requires Mn(2+) as cofactor. Mg(2+) is required as a cofactor. The cofactor is Co(2+). It depends on K(+) as a cofactor. As to expression, mostly expressed in stems.

It localises to the cytoplasm. The catalysed reaction is L-methionine + ATP + H2O = S-adenosyl-L-methionine + phosphate + diphosphate. Its pathway is amino-acid biosynthesis; S-adenosyl-L-methionine biosynthesis; S-adenosyl-L-methionine from L-methionine: step 1/1. Catalyzes the formation of S-adenosylmethionine from methionine and ATP. The reaction comprises two steps that are both catalyzed by the same enzyme: formation of S-adenosylmethionine (AdoMet) and triphosphate, and subsequent hydrolysis of the triphosphate. This is S-adenosylmethionine synthase 1 (SAM1) from Solanum lycopersicum (Tomato).